Here is a 136-residue protein sequence, read N- to C-terminus: Nucleoside diphosphate kinase (136 aa).

ATP is bound by residues Lys-10, Phe-58, Arg-86, Thr-92, Arg-104, and Asn-114. His-117 serves as the catalytic Pros-phosphohistidine intermediate.

It belongs to the NDK family. Homotetramer. Requires Mg(2+) as cofactor.

It localises to the cytoplasm. The enzyme catalyses a 2'-deoxyribonucleoside 5'-diphosphate + ATP = a 2'-deoxyribonucleoside 5'-triphosphate + ADP. The catalysed reaction is a ribonucleoside 5'-diphosphate + ATP = a ribonucleoside 5'-triphosphate + ADP. In terms of biological role, major role in the synthesis of nucleoside triphosphates other than ATP. The ATP gamma phosphate is transferred to the NDP beta phosphate via a ping-pong mechanism, using a phosphorylated active-site intermediate. The protein is Nucleoside diphosphate kinase of Mycobacterium avium (strain 104).